Here is a 121-residue protein sequence, read N- to C-terminus: Large ribosomal subunit protein bL19 (121 aa).

Belongs to the bacterial ribosomal protein bL19 family.

Functionally, this protein is located at the 30S-50S ribosomal subunit interface and may play a role in the structure and function of the aminoacyl-tRNA binding site. The sequence is that of Large ribosomal subunit protein bL19 from Bifidobacterium adolescentis (strain ATCC 15703 / DSM 20083 / NCTC 11814 / E194a).